The sequence spans 228 residues: Rab-like protein 2A (228 aa).

GTP-binding positions include Gly-28 to Ser-35, Asp-76 to Gln-80, and Asn-133 to Asp-136. The segment at Leu-200–Ser-228 is disordered.

The protein belongs to the small GTPase superfamily. Rab family. As to quaternary structure, interacts with IFT27, IFT81, IFT172, ATP6V1E1, HK1, LDHC, MAPRE1 and HSPA2. As to expression, expressed in the testis.

Functionally, plays an essential role in male fertility, sperm intra-flagellar transport, and tail assembly. Binds, in a GTP-regulated manner, to a specific set of effector proteins including key proteins involved in cilia development and function and delivers them into the growing sperm tail. The protein is Rab-like protein 2A (RABL2A) of Homo sapiens (Human).